The sequence spans 430 residues: MIKSKIVLLSALVSCALISGCKEENKTNVSIEFMHSSVEQERQAVISKLIARFEKENPGITVKQVPVEEDAYNTKVITLSRSGSLPEVIETSHDYAKVMDKEQLIDRKAVATVISNVGEGAFYDGVLRIVRTEDGSAWTGVPVSAWIGGIWYRKDVLAKAGLEEPKNWQQLLDVAQKLNDPANKKYGIALPTAESVLTEQSFSQFALSNQANVFNAEGKITLDTPEMMQALTYYRDLTANTMPGSNDIMEVKDAFMNGTAPMAIYSTYILPAVIKEGDPKNVGFVVPTEKNSAVYGMLTSLTITAGQKTEETEAAEKFVTFMEQADNIADWVMMSPGAALPVNKAVVTTATWKDNDVIKALGELPNQLIGELPNIQVFGAVGDKNFTRMGDVTGSGVVSSMVHNVTVGKADLSTTLQASQKKLDELIEQH.

An N-terminal signal peptide occupies residues 1–19 (MIKSKIVLLSALVSCALIS).

This sequence belongs to the bacterial solute-binding protein 1 family.

Its subcellular location is the periplasm. Probably part of the binding-protein-dependent transport system YcjNOP. This chain is Putative ABC transporter periplasmic-binding protein YcjN (ycjN), found in Escherichia coli (strain K12).